The sequence spans 105 residues: Large ribosomal subunit protein uL24 (105 aa).

The protein belongs to the universal ribosomal protein uL24 family. In terms of assembly, part of the 50S ribosomal subunit.

In terms of biological role, one of two assembly initiator proteins, it binds directly to the 5'-end of the 23S rRNA, where it nucleates assembly of the 50S subunit. Its function is as follows. One of the proteins that surrounds the polypeptide exit tunnel on the outside of the subunit. In Hahella chejuensis (strain KCTC 2396), this protein is Large ribosomal subunit protein uL24.